A 207-amino-acid chain; its full sequence is Small ribosomal subunit protein uS4 (207 aa).

The segment at 30 to 51 (DKSKFDSKPGQHGRTSGARTSD) is disordered. Positions 97 to 157 (SRLDNVVYRM…EKSKKQGRIA (61 aa)) constitute an S4 RNA-binding domain.

This sequence belongs to the universal ribosomal protein uS4 family. Part of the 30S ribosomal subunit. Contacts protein S5. The interaction surface between S4 and S5 is involved in control of translational fidelity.

Functionally, one of the primary rRNA binding proteins, it binds directly to 16S rRNA where it nucleates assembly of the body of the 30S subunit. In terms of biological role, with S5 and S12 plays an important role in translational accuracy. In Verminephrobacter eiseniae (strain EF01-2), this protein is Small ribosomal subunit protein uS4.